The following is a 471-amino-acid chain: MNYTGKKILVLGMGKTGISMVKWLSRLGAQLSVADTRTSPPNLELISRIVPGEAIFCGPLKEELFQGIDAIAISPGVAVAEPLVQAALQQGVPVIGDIELFAVALDQYAPPGTKILAITGSNGKTTVTSMVGEMVKNAGWDVEVAGNIGPAALDALMQRMDANKWPHLWALELSSFQLETTSSLRPDAATVLNLSEDHLDRYDSIEEYAAAKARIFSRPHNNGCVQILNRDDARVYAMADKNSKQVTFGLSAPVSDEEFGLLPGGSDVWLAQGSTHLLKTSELAVAGLHNAANALAALALCRAVDLPFEPLLHALRTFRGLPHRMQKVAEFNGVTFYDDSKSTNIGSAVAALNGFRKNVILIAGGDGKGQDFSPLEQPVSKHVRSVVLLGRDADKVAQAIQASNVPIHRVTTMDEAVQVSFLLAEHGDVVLLSPACASLDMFNNYIHRAEVFTAAVRLIERKFVLTAQTCH.

120 to 126 (GSNGKTT) provides a ligand contact to ATP.

This sequence belongs to the MurCDEF family.

It is found in the cytoplasm. It carries out the reaction UDP-N-acetyl-alpha-D-muramoyl-L-alanine + D-glutamate + ATP = UDP-N-acetyl-alpha-D-muramoyl-L-alanyl-D-glutamate + ADP + phosphate + H(+). Its pathway is cell wall biogenesis; peptidoglycan biosynthesis. Cell wall formation. Catalyzes the addition of glutamate to the nucleotide precursor UDP-N-acetylmuramoyl-L-alanine (UMA). This chain is UDP-N-acetylmuramoylalanine--D-glutamate ligase, found in Nitrosomonas europaea (strain ATCC 19718 / CIP 103999 / KCTC 2705 / NBRC 14298).